A 344-amino-acid chain; its full sequence is MSLDLDQVVADAQTAFASVEDNASLENEKARFLGKSGVLTDLLKGLGKLDPQTRKSEGARINLAKSRVEAALNDRRQALADALMNARLAAEAIDVTLPGRDVAEGSLHPVMNTWERVAQIFGSIGFDVADGPEIETDWMNFTALNNPDNHPARSMQDTFYIDGRDSDDKLLLLRTHTSPMQVRYARMHVEKYKHLDRIPPIKVIAPGRTYRVDSDATHSPMFHQVEGLWIADNISFADLKGVYTDFLRKFFESDDIQVRFRPSYFPFTEPSAEIDMAFGNGRWLEISGSGQVHPTVVRNMGLDPERYIGFAFGSGLERLTMLRYGINDLRLFFEGDVRFLRQFA.

Position 269 (E269) interacts with Mg(2+).

It belongs to the class-II aminoacyl-tRNA synthetase family. Phe-tRNA synthetase alpha subunit type 1 subfamily. As to quaternary structure, tetramer of two alpha and two beta subunits. It depends on Mg(2+) as a cofactor.

Its subcellular location is the cytoplasm. It catalyses the reaction tRNA(Phe) + L-phenylalanine + ATP = L-phenylalanyl-tRNA(Phe) + AMP + diphosphate + H(+). This chain is Phenylalanine--tRNA ligase alpha subunit, found in Ralstonia nicotianae (strain ATCC BAA-1114 / GMI1000) (Ralstonia solanacearum).